Reading from the N-terminus, the 365-residue chain is Phospho-N-acetylmuramoyl-pentapeptide-transferase (365 aa).

10 helical membrane passes run 29–49 (VGGL…IIVW), 73–93 (GTPT…VIIW), 97–117 (SNIY…LGLV), 133–153 (ILNK…IMFI), 171–191 (IVCK…VGTS), 202–222 (GLVI…TWVV), 242–262 (LVVV…FNSY), 266–286 (IFMG…VSIL), 291–311 (YLLL…IFQV), and 341–361 (IVVR…VIFI).

Belongs to the glycosyltransferase 4 family. MraY subfamily. Mg(2+) is required as a cofactor.

The protein localises to the cell inner membrane. It carries out the reaction UDP-N-acetyl-alpha-D-muramoyl-L-alanyl-gamma-D-glutamyl-meso-2,6-diaminopimeloyl-D-alanyl-D-alanine + di-trans,octa-cis-undecaprenyl phosphate = di-trans,octa-cis-undecaprenyl diphospho-N-acetyl-alpha-D-muramoyl-L-alanyl-D-glutamyl-meso-2,6-diaminopimeloyl-D-alanyl-D-alanine + UMP. It functions in the pathway cell wall biogenesis; peptidoglycan biosynthesis. Its function is as follows. Catalyzes the initial step of the lipid cycle reactions in the biosynthesis of the cell wall peptidoglycan: transfers peptidoglycan precursor phospho-MurNAc-pentapeptide from UDP-MurNAc-pentapeptide onto the lipid carrier undecaprenyl phosphate, yielding undecaprenyl-pyrophosphoryl-MurNAc-pentapeptide, known as lipid I. The sequence is that of Phospho-N-acetylmuramoyl-pentapeptide-transferase from Blochmanniella floridana.